A 786-amino-acid polypeptide reads, in one-letter code: von Willebrand factor A domain-containing protein 5A (786 aa).

In terms of domain architecture, VIT spans 1–131 (MVHFCGLLTL…KAAVTLKYVQ (131 aa)). In terms of domain architecture, VWFA spans 281 to 462 (EFIFLMDRSG…KALRTLKRSL (182 aa)).

Expressed at low level in many tissues. Not expressed in 80% of tumor cell lines tested.

Functionally, may play a role in tumorigenesis as a tumor suppressor. Altered expression of this protein and disruption of the molecular pathway it is involved in, may contribute directly to or modify tumorigenesis. The chain is von Willebrand factor A domain-containing protein 5A (VWA5A) from Homo sapiens (Human).